A 428-amino-acid polypeptide reads, in one-letter code: Isocitrate dehydrogenase [NADP], mitochondrial (428 aa).

A mitochondrion-targeting transit peptide spans Met1–Ala16. NADP(+) contacts are provided by residues Thr91–Thr93 and Arg98. Position 93 (Thr93) interacts with substrate. Substrate-binding positions include Ser110–Arg116, Arg125, and Arg148. Asp269 contacts Mn(2+). Position 277 (Lys277) interacts with NADP(+). Asp292 serves as a coordination point for Mn(2+). NADP(+)-binding positions include Gly327–His332 and Asn345.

Belongs to the isocitrate and isopropylmalate dehydrogenases family. In terms of assembly, homodimer. Mg(2+) is required as a cofactor. It depends on Mn(2+) as a cofactor.

The protein resides in the mitochondrion. The catalysed reaction is D-threo-isocitrate + NADP(+) = 2-oxoglutarate + CO2 + NADPH. Its activity is regulated as follows. The enzyme is subject to end product inhibition by NADPH and 2-oxoglutarate. Functionally, mitochondrial IDP1 may regulate flux through the tricarboxylic acid cycle and respiration. Its probably critical function is the production of NADPH. The chain is Isocitrate dehydrogenase [NADP], mitochondrial (IDP1) from Saccharomyces cerevisiae (strain ATCC 204508 / S288c) (Baker's yeast).